The chain runs to 232 residues: Flavin-dependent thymidylate synthase (232 aa).

The region spanning 1–204 (MKIALLQHTP…PTIFRDAGPG (204 aa)) is the ThyX domain. FAD-binding positions include S55, 79–81 (RHR), and Q87. DUMP-binding positions include 76–79 (QLVR), 87–91 (QQSQR), and R143. Positions 79 to 89 (RHRIASYSQQS) match the ThyX motif motif. FAD contacts are provided by residues 159-161 (NAR) and H165. R170 lines the dUMP pocket. The active-site Involved in ionization of N3 of dUMP, leading to its activation is the R170.

Belongs to the thymidylate synthase ThyX family. As to quaternary structure, homotetramer. FAD is required as a cofactor.

It carries out the reaction dUMP + (6R)-5,10-methylene-5,6,7,8-tetrahydrofolate + NADPH + H(+) = dTMP + (6S)-5,6,7,8-tetrahydrofolate + NADP(+). Its pathway is pyrimidine metabolism; dTTP biosynthesis. Its function is as follows. Catalyzes the reductive methylation of 2'-deoxyuridine-5'-monophosphate (dUMP) to 2'-deoxythymidine-5'-monophosphate (dTMP) while utilizing 5,10-methylenetetrahydrofolate (mTHF) as the methyl donor, and NADPH and FADH(2) as the reductant. In Geobacter sulfurreducens (strain ATCC 51573 / DSM 12127 / PCA), this protein is Flavin-dependent thymidylate synthase.